The sequence spans 156 residues: Ribosomal RNA large subunit methyltransferase H (156 aa).

S-adenosyl-L-methionine-binding positions include leucine 72, glycine 104, and 123–128; that span reads LGPMTF.

The protein belongs to the RNA methyltransferase RlmH family. As to quaternary structure, homodimer.

The protein resides in the cytoplasm. The catalysed reaction is pseudouridine(1915) in 23S rRNA + S-adenosyl-L-methionine = N(3)-methylpseudouridine(1915) in 23S rRNA + S-adenosyl-L-homocysteine + H(+). In terms of biological role, specifically methylates the pseudouridine at position 1915 (m3Psi1915) in 23S rRNA. The polypeptide is Ribosomal RNA large subunit methyltransferase H (Nitratidesulfovibrio vulgaris (strain ATCC 29579 / DSM 644 / CCUG 34227 / NCIMB 8303 / VKM B-1760 / Hildenborough) (Desulfovibrio vulgaris)).